The primary structure comprises 506 residues: 2,3-bisphosphoglycerate-independent phosphoglycerate mutase (506 aa).

The Mn(2+) site is built by Asp-13 and Ser-63. The Phosphoserine intermediate role is filled by Ser-63. Substrate is bound by residues His-124, 153 to 154 (RD), Arg-183, Arg-189, 254 to 257 (RADR), and Lys-330. Residues Asp-396, His-400, Asp-437, His-438, and His-456 each contribute to the Mn(2+) site.

It belongs to the BPG-independent phosphoglycerate mutase family. Monomer. Mn(2+) serves as cofactor.

The enzyme catalyses (2R)-2-phosphoglycerate = (2R)-3-phosphoglycerate. It participates in carbohydrate degradation; glycolysis; pyruvate from D-glyceraldehyde 3-phosphate: step 3/5. Catalyzes the interconversion of 2-phosphoglycerate and 3-phosphoglycerate. The polypeptide is 2,3-bisphosphoglycerate-independent phosphoglycerate mutase (Cereibacter sphaeroides (strain ATCC 17029 / ATH 2.4.9) (Rhodobacter sphaeroides)).